Here is a 142-residue protein sequence, read N- to C-terminus: Large ribosomal subunit protein uL11 (142 aa).

The protein belongs to the universal ribosomal protein uL11 family. As to quaternary structure, part of the ribosomal stalk of the 50S ribosomal subunit. Interacts with L10 and the large rRNA to form the base of the stalk. L10 forms an elongated spine to which L12 dimers bind in a sequential fashion forming a multimeric L10(L12)X complex. In terms of processing, one or more lysine residues are methylated.

Forms part of the ribosomal stalk which helps the ribosome interact with GTP-bound translation factors. This chain is Large ribosomal subunit protein uL11, found in Rhodopseudomonas palustris (strain BisB18).